Here is a 210-residue protein sequence, read N- to C-terminus: Leucyl/phenylalanyl-tRNA--protein transferase (210 aa).

It belongs to the L/F-transferase family.

It localises to the cytoplasm. It carries out the reaction N-terminal L-lysyl-[protein] + L-leucyl-tRNA(Leu) = N-terminal L-leucyl-L-lysyl-[protein] + tRNA(Leu) + H(+). The catalysed reaction is N-terminal L-arginyl-[protein] + L-leucyl-tRNA(Leu) = N-terminal L-leucyl-L-arginyl-[protein] + tRNA(Leu) + H(+). It catalyses the reaction L-phenylalanyl-tRNA(Phe) + an N-terminal L-alpha-aminoacyl-[protein] = an N-terminal L-phenylalanyl-L-alpha-aminoacyl-[protein] + tRNA(Phe). Functions in the N-end rule pathway of protein degradation where it conjugates Leu, Phe and, less efficiently, Met from aminoacyl-tRNAs to the N-termini of proteins containing an N-terminal arginine or lysine. The polypeptide is Leucyl/phenylalanyl-tRNA--protein transferase (Ruegeria sp. (strain TM1040) (Silicibacter sp.)).